The primary structure comprises 228 residues: MITQKEKEHLAKDKQNIYLRIISGIVLVSLFVVAILWFKTLFYILMILVGLGMLSEWCNMTSSSIHYLLIGFIIIPIPISLLIFLSTQESNRLVIMLYFCIIWSVDTFAMIGGKTFKGTKLAPKISPKKTWTGLIIGTISAGLIAVLVSLIPYYHIENYYFSNKIYLFIISCILALIAQSSDLFISYFKRKFNIKDSGHIIPGHGGVLDRFDSIILTAPVFFGINIYL.

The next 6 helical transmembrane spans lie at 31–51 (FVVA…LVGL), 65–85 (IHYL…LIFL), 93–113 (LVIM…MIGG), 131–151 (WTGL…VSLI), 165–185 (IYLF…DLFI), and 206–226 (GVLD…GINI).

This sequence belongs to the CDS family.

It is found in the cell membrane. The enzyme catalyses a 1,2-diacyl-sn-glycero-3-phosphate + CTP + H(+) = a CDP-1,2-diacyl-sn-glycerol + diphosphate. It participates in phospholipid metabolism; CDP-diacylglycerol biosynthesis; CDP-diacylglycerol from sn-glycerol 3-phosphate: step 3/3. This chain is Phosphatidate cytidylyltransferase (cdsA), found in Rickettsia typhi (strain ATCC VR-144 / Wilmington).